A 108-amino-acid polypeptide reads, in one-letter code: MITSAAYVGAAVAEIAGCFAFWAWLRLGKSVWWLAPGMVSLALFAYLLTLVDSEAAGRAYAAYGGVYIIASLGWLWSVEGLRPDRWDLTGAAICLLGAAIILFGPRQI.

4 helical membrane-spanning segments follow: residues 5–25, 31–51, 61–81, and 88–108; these read AAYV…WAWL, VWWL…LTLV, AAYG…VEGL, and LTGA…PRQI.

The protein belongs to the UPF0060 family.

It is found in the cell inner membrane. This chain is UPF0060 membrane protein Nham_2004, found in Nitrobacter hamburgensis (strain DSM 10229 / NCIMB 13809 / X14).